We begin with the raw amino-acid sequence, 178 residues long: Nicotinamide-nucleotide adenylyltransferase (178 aa).

This sequence belongs to the archaeal NMN adenylyltransferase family.

It localises to the cytoplasm. The catalysed reaction is beta-nicotinamide D-ribonucleotide + ATP + H(+) = diphosphate + NAD(+). It functions in the pathway cofactor biosynthesis; NAD(+) biosynthesis; NAD(+) from nicotinamide D-ribonucleotide: step 1/1. The sequence is that of Nicotinamide-nucleotide adenylyltransferase from Pyrobaculum neutrophilum (strain DSM 2338 / JCM 9278 / NBRC 100436 / V24Sta) (Thermoproteus neutrophilus).